Reading from the N-terminus, the 278-residue chain is Bicarbonate transport ATP-binding protein CmpD (278 aa).

In terms of domain architecture, ABC transporter spans 21-254 (LIVENVSKIY…RPRDRERIME (234 aa)). ATP is bound at residue 57-64 (GHSGCGKS).

The protein belongs to the ABC transporter superfamily. Nitrate/nitrite/cyanate uptake transporter (NitT) (TC 3.A.1.16) family. In terms of assembly, the complex is composed of two ATP-binding proteins (CmpC and CmpD), a transmembrane protein (CmpB) and a solute-binding protein (CmpA).

The protein localises to the cell inner membrane. Part of the ABC transporter complex CmpABCD involved in bicarbonate transport. Responsible for energy coupling to the transport system. In Synechococcus elongatus (strain ATCC 33912 / PCC 7942 / FACHB-805) (Anacystis nidulans R2), this protein is Bicarbonate transport ATP-binding protein CmpD (cmpD).